The sequence spans 122 residues: Small ribosomal subunit protein uS13 (122 aa).

The interval 92–122 is disordered; the sequence is HRKQLPVRGQRTHTNARTRKGKAKPIAGKKK.

It belongs to the universal ribosomal protein uS13 family. As to quaternary structure, part of the 30S ribosomal subunit. Forms a loose heterodimer with protein S19. Forms two bridges to the 50S subunit in the 70S ribosome.

Its function is as follows. Located at the top of the head of the 30S subunit, it contacts several helices of the 16S rRNA. In the 70S ribosome it contacts the 23S rRNA (bridge B1a) and protein L5 of the 50S subunit (bridge B1b), connecting the 2 subunits; these bridges are implicated in subunit movement. Contacts the tRNAs in the A and P-sites. This is Small ribosomal subunit protein uS13 from Methylobacterium radiotolerans (strain ATCC 27329 / DSM 1819 / JCM 2831 / NBRC 15690 / NCIMB 10815 / 0-1).